The following is an 845-amino-acid chain: MPKAPKQQPPEPEWIGDGESTSPSDKVVKKGKKDKKIKKTFFEELAVEDKQAGEEEKVLKEKEQQQQQQQQQQKKKRDTRKGRRKKDVDDDGEEKELMERLKKLSVPTSDEEDEVPAPKPRGGKKTKGGNVFAALIQDQSEEEEEEEKHPPKPAKPEKNRINKAVSEEQQPALKGKKGKEEKSKGKAKPQNKFAALDNEEEDKEEEIIKEKEPPKQGKEKAKKAEQGSEEEGEGEEEEEEGGESKADDPYAHLSKKEKKKLKKQMEYERQVASLKAANAAENDFSVSQAEMSSRQAMLENASDIKLEKFSISAHGKELFVNADLYIVAGRRYGLVGPNGKGKTTLLKHIANRALSIPPNIDVLLCEQEVVADETPAVQAVLRADTKRLKLLEEERRLQGQLEQGDDTAAERLEKVYEELRATGAAAAEAKARRILAGLGFDPEMQNRPTQKFSGGWRMRVSLARALFMEPTLLMLDEPTNHLDLNAVIWLNNYLQGWRKTLLIVSHDQGFLDDVCTDIIHLDAQRLHYYRGNYMTFKKMYQQKQKELLKQYEKQEKKLKELKAGGKSTKQAEKQTKEALTRKQQKCRRKNQDEESQEAPELLKRPKEYTVRFTFPDPPPLSPPVLGLHGVTFGYQGQKPLFKNLDFGIDMDSRICIVGPNGVGKSTLLLLLTGKLTPTHGEMRKNHRLKIGFFNQQYAEQLRMEETPTEYLQRGFNLPYQDARKCLGRFGLESHAHTIQICKLSGGQKARVVFAELACREPDVLILDEPTNNLDIESIDALGEAINEYKGAVIVVSHDARLITETNCQLWVVEEQSVSQIDGDFEDYKREVLEALGEVMVSRPRE.

A disordered region spans residues 1 to 261; it reads MPKAPKQQPP…HLSKKEKKKL (261 aa). Ser-22 and Ser-24 each carry phosphoserine. Residues 29 to 39 show a composition bias toward basic residues; that stretch reads KKGKKDKKIKK. Over residues 47–64 the composition is skewed to basic and acidic residues; it reads VEDKQAGEEEKVLKEKEQ. Residues 73–85 are compositionally biased toward basic residues; it reads QKKKRDTRKGRRK. A Phosphoserine modification is found at Ser-105. Thr-108 is modified (phosphothreonine). Ser-109 and Ser-140 each carry phosphoserine; by CK2. Positions 147–160 are enriched in basic and acidic residues; that stretch reads EKHPPKPAKPEKNR. Ser-166 is subject to Phosphoserine. The span at 206–226 shows a compositional bias: basic and acidic residues; it reads EIIKEKEPPKQGKEKAKKAEQ. Over residues 227–241 the composition is skewed to acidic residues; sequence GSEEEGEGEEEEEEG. Ser-228 carries the phosphoserine modification. Residues 304–548 enclose the ABC transporter 1 domain; that stretch reads IKLEKFSISA…MYQQKQKELL (245 aa). 336–343 serves as a coordination point for ATP; that stretch reads GPNGKGKT. A compositionally biased stretch (basic and acidic residues) spans 559–580; the sequence is KELKAGGKSTKQAEKQTKEALT. The segment at 559-602 is disordered; that stretch reads KELKAGGKSTKQAEKQTKEALTRKQQKCRRKNQDEESQEAPELL. At Ser-595 the chain carries Phosphoserine. An ABC transporter 2 domain is found at 625–840; sequence LGLHGVTFGY…VLEALGEVMV (216 aa). 658–665 provides a ligand contact to ATP; that stretch reads GPNGVGKS.

The protein belongs to the ABC transporter superfamily. ABCF family. EF3 subfamily. In terms of assembly, isoform 2 interacts (via N-terminus) with EIF2S1; the interaction is independent of its phosphorylated status. Isoform 2 associates (via both ABC transporter domains) with the ribosomes. Isoform 2 is phosphorylated at phosphoserine and phosphothreonine. Isoform 2 phosphorylation on Ser-109 and Ser-140 by CK2 inhibits association of EIF2 with ribosomes. As to expression, ubiquitous.

The protein localises to the cytoplasm. Its subcellular location is the nucleus. It localises to the nucleoplasm. It is found in the nucleus envelope. Its function is as follows. Isoform 2 is required for efficient Cap- and IRES-mediated mRNA translation initiation. Isoform 2 is not involved in the ribosome biogenesis. The polypeptide is ATP-binding cassette sub-family F member 1 (ABCF1) (Homo sapiens (Human)).